Here is a 172-residue protein sequence, read N- to C-terminus: Co-chaperone protein HscB (172 aa).

The J domain occupies 2–74; it reads DYFTLFGLPI…LKRAEYMLSL (73 aa).

Belongs to the HscB family. Interacts with HscA and stimulates its ATPase activity. Interacts with IscU.

Functionally, co-chaperone involved in the maturation of iron-sulfur cluster-containing proteins. Seems to help targeting proteins to be folded toward HscA. This Pectobacterium carotovorum subsp. carotovorum (strain PC1) protein is Co-chaperone protein HscB.